The primary structure comprises 1097 residues: Translation initiation factor IF-2 (1097 aa).

The segment at 79-458 is disordered; the sequence is LEKRVSPQAD…RVIKKKPKKA (380 aa). The span at 97 to 112 shows a compositional bias: basic and acidic residues; it reads AKKEASQEKADAHAKL. A compositionally biased stretch (low complexity) spans 157-173; the sequence is AATLAVEEAPIAAAPTE. Composition is skewed to basic and acidic residues over residues 174 to 190 and 202 to 221; these read EPMHNSEAELPESKIDS and VEVHLEPKEQEVQELNHAEE. Residues 224 to 236 show a composition bias toward low complexity; the sequence is TPTTEASSEETSA. Residues 258–267 are compositionally biased toward polar residues; sequence RKTQNTTNVS. Positions 268 to 286 are enriched in basic and acidic residues; it reads EENKQHEKQPETLKSDKAM. Residues 340-363 show a composition bias toward polar residues; sequence SDSLQAEISRQQNEISNRFSQSEN. Residues 376 to 385 show a composition bias toward basic residues; the sequence is HKKKRKRKKN. The segment covering 402-443 has biased composition (basic and acidic residues); it reads PKQEEKPVKKEKPKEREKPAAGKKEQTPGKKPVREDQKERVL. A tr-type G domain is found at 591-761; that stretch reads TRPPVVTIMG…LVEAELLELK (171 aa). Residues 600-607 are G1; it reads GHVDHGKT. 600-607 serves as a coordination point for GTP; it reads GHVDHGKT. Residues 625–629 are G2; it reads GITQH. The segment at 647–650 is G3; the sequence is DTPG. Residues 647–651 and 701–704 each bind GTP; these read DTPGH and NKID. The tract at residues 701-704 is G4; sequence NKID. The G5 stretch occupies residues 737–739; it reads SAK.

Belongs to the TRAFAC class translation factor GTPase superfamily. Classic translation factor GTPase family. IF-2 subfamily.

The protein localises to the cytoplasm. Functionally, one of the essential components for the initiation of protein synthesis. Protects formylmethionyl-tRNA from spontaneous hydrolysis and promotes its binding to the 30S ribosomal subunits. Also involved in the hydrolysis of GTP during the formation of the 70S ribosomal complex. In Chloroherpeton thalassium (strain ATCC 35110 / GB-78), this protein is Translation initiation factor IF-2.